Here is a 340-residue protein sequence, read N- to C-terminus: Aspartate-semialdehyde dehydrogenase (340 aa).

NADP(+) is bound by residues 11-14 (TGEV) and 39-40 (RS). Arg-100 serves as a coordination point for phosphate. Cys-131 serves as the catalytic Acyl-thioester intermediate. A substrate-binding site is contributed by Gln-158. Residue 161-162 (SG) coordinates NADP(+). Residue Lys-216 participates in phosphate binding. Arg-238 contacts substrate. The active-site Proton acceptor is the His-245. Asn-318 provides a ligand contact to NADP(+).

This sequence belongs to the aspartate-semialdehyde dehydrogenase family. Homodimer.

The enzyme catalyses L-aspartate 4-semialdehyde + phosphate + NADP(+) = 4-phospho-L-aspartate + NADPH + H(+). Its pathway is amino-acid biosynthesis; L-lysine biosynthesis via DAP pathway; (S)-tetrahydrodipicolinate from L-aspartate: step 2/4. It participates in amino-acid biosynthesis; L-methionine biosynthesis via de novo pathway; L-homoserine from L-aspartate: step 2/3. It functions in the pathway amino-acid biosynthesis; L-threonine biosynthesis; L-threonine from L-aspartate: step 2/5. Its function is as follows. Catalyzes the NADPH-dependent formation of L-aspartate-semialdehyde (L-ASA) by the reductive dephosphorylation of L-aspartyl-4-phosphate. In Aquifex aeolicus (strain VF5), this protein is Aspartate-semialdehyde dehydrogenase.